The sequence spans 684 residues: Pseudohemocyanin-1 (684 aa).

The signal sequence occupies residues 1 to 23 (SLVVAAAAASPYSGSHDFSGFQR). The segment at 7–32 (AAASPYSGSHDFSGFQRDEPDGVPTA) is disordered. Residues asparagine 100, asparagine 193, asparagine 230, and asparagine 626 are each glycosylated (N-linked (GlcNAc...) asparagine).

This sequence belongs to the tyrosinase family. Hemocyanin subfamily. As to quaternary structure, hexamer. As to expression, strongly expressed in ovaries. Also expressed in heart. Not detected in hepatopancreas, gills, connective tissue or muscle.

Functionally, does not function as a hemocyanin. The polypeptide is Pseudohemocyanin-1 (Homarus americanus (American lobster)).